A 201-amino-acid chain; its full sequence is Small ribosomal subunit protein uS4 (201 aa).

The region spanning 91-151 is the S4 RNA-binding domain; that stretch reads SRLDNVVYRA…EKSQKMNWFE (61 aa).

This sequence belongs to the universal ribosomal protein uS4 family. In terms of assembly, part of the 30S ribosomal subunit. Contacts protein S5. The interaction surface between S4 and S5 is involved in control of translational fidelity.

Its function is as follows. One of the primary rRNA binding proteins, it binds directly to 16S rRNA where it nucleates assembly of the body of the 30S subunit. Functionally, with S5 and S12 plays an important role in translational accuracy. This Corynebacterium glutamicum (strain R) protein is Small ribosomal subunit protein uS4.